We begin with the raw amino-acid sequence, 492 residues long: Catalase (492 aa).

Residues histidine 65 and asparagine 138 contribute to the active site. Tyrosine 348 is a binding site for heme.

It belongs to the catalase family. In terms of assembly, homotetramer. It depends on heme as a cofactor.

The protein localises to the cytoplasm. It is found in the cytosol. The protein resides in the peroxisome matrix. The catalysed reaction is 2 H2O2 = O2 + 2 H2O. Functionally, catalyzes the degradation of hydrogen peroxide (H(2)O(2)) generated by peroxisomal oxidases to water and oxygen, thereby protecting cells from the toxic effects of hydrogen peroxide. The polypeptide is Catalase (CATA) (Triticum aestivum (Wheat)).